The sequence spans 1242 residues: ATP-dependent helicase/nuclease subunit A (1242 aa).

Residues 12 to 487 (SRWTDEQWKA…IDLASNFRSR (476 aa)) form the UvrD-like helicase ATP-binding domain. Residue 33–40 (AAAGSGKT) participates in ATP binding. The region spanning 514-808 (AAQLKYGADY…RVMTIHSSKG (295 aa)) is the UvrD-like helicase C-terminal domain.

This sequence belongs to the helicase family. AddA subfamily. As to quaternary structure, heterodimer of AddA and AddB/RexB. It depends on Mg(2+) as a cofactor.

It carries out the reaction Couples ATP hydrolysis with the unwinding of duplex DNA by translocating in the 3'-5' direction.. It catalyses the reaction ATP + H2O = ADP + phosphate + H(+). Functionally, the heterodimer acts as both an ATP-dependent DNA helicase and an ATP-dependent, dual-direction single-stranded exonuclease. Recognizes the chi site generating a DNA molecule suitable for the initiation of homologous recombination. The AddA nuclease domain is required for chi fragment generation; this subunit has the helicase and 3' -&gt; 5' nuclease activities. The sequence is that of ATP-dependent helicase/nuclease subunit A from Geobacillus thermodenitrificans (strain NG80-2).